We begin with the raw amino-acid sequence, 337 residues long: Heme A synthase (337 aa).

Transmembrane regions (helical) follow at residues 3–23 (LARW…IGGI), 94–114 (VIGL…MIPA), 120–140 (LLAL…MVAS), 154–174 (LSAH…TALD), 191–211 (GVAW…AWVA), 248–268 (FLLH…LVVL), and 289–309 (TMVV…IAVA). H254 lines the heme pocket. Residue H310 coordinates heme. The chain crosses the membrane as a helical span at residues 311-331 (QLTGALLVISTAWAAHAIGTA).

The protein belongs to the COX15/CtaA family. Type 2 subfamily. As to quaternary structure, interacts with CtaB. The cofactor is heme b.

It localises to the cell membrane. The enzyme catalyses Fe(II)-heme o + 2 A + H2O = Fe(II)-heme a + 2 AH2. The protein operates within porphyrin-containing compound metabolism; heme A biosynthesis; heme A from heme O: step 1/1. Catalyzes the conversion of heme O to heme A by two successive hydroxylations of the methyl group at C8. The first hydroxylation forms heme I, the second hydroxylation results in an unstable dihydroxymethyl group, which spontaneously dehydrates, resulting in the formyl group of heme A. This chain is Heme A synthase, found in Erythrobacter litoralis (strain HTCC2594).